Here is a 488-residue protein sequence, read N- to C-terminus: Germacrene A hydroxylase (488 aa).

The Cytoplasmic portion of the chain corresponds to 1-6 (MEVSLT). Residues 7–23 (TSIALATIVFFLYKLLT) form a helical; Signal-anchor for type II membrane protein membrane-spanning segment. Topologically, residues 24-488 (RPTSSKNRLP…KTELMLVPSF (465 aa)) are lumenal. Asparagine 169, asparagine 260, asparagine 379, and asparagine 412 each carry an N-linked (GlcNAc...) asparagine glycan. Cysteine 432 is a binding site for heme.

The protein belongs to the cytochrome P450 family. Requires heme as cofactor. As to expression, expressed in leaf primordia.

The protein localises to the endoplasmic reticulum membrane. It catalyses the reaction (+)-(R)-germacrene A + 3 reduced [NADPH--hemoprotein reductase] + 3 O2 = germacra-1(10),4,11(13)-trien-12-oate + 3 oxidized [NADPH--hemoprotein reductase] + 4 H2O + 4 H(+). It functions in the pathway secondary metabolite biosynthesis; terpenoid biosynthesis. In terms of biological role, involved in the biosynthesis of germacrene-derived sesquiterpene lactones. Catalyzes three consecutive oxidations of germacrene A to produce germacrene A acid. Could also catalyze the three-step oxidation of non-natural substrate amorphadiene to artemisinic acid. The sequence is that of Germacrene A hydroxylase from Helianthus annuus (Common sunflower).